We begin with the raw amino-acid sequence, 307 residues long: Ribonuclease HII (307 aa).

Residues glutamate 44–leucine 235 form the RNase H type-2 domain. 3 residues coordinate a divalent metal cation: aspartate 50, glutamate 51, and aspartate 144. The segment at alanine 241–proline 307 is disordered. Residues alanine 250–glycine 280 are compositionally biased toward low complexity. Residues arginine 287–aspartate 296 are compositionally biased toward basic and acidic residues.

Belongs to the RNase HII family. Mn(2+) serves as cofactor. Requires Mg(2+) as cofactor.

The protein resides in the cytoplasm. It catalyses the reaction Endonucleolytic cleavage to 5'-phosphomonoester.. Endonuclease that specifically degrades the RNA of RNA-DNA hybrids. The polypeptide is Ribonuclease HII (Acidothermus cellulolyticus (strain ATCC 43068 / DSM 8971 / 11B)).